The following is a 466-amino-acid chain: Asparagine--tRNA ligase (466 aa).

This sequence belongs to the class-II aminoacyl-tRNA synthetase family. Homodimer.

Its subcellular location is the cytoplasm. It carries out the reaction tRNA(Asn) + L-asparagine + ATP = L-asparaginyl-tRNA(Asn) + AMP + diphosphate + H(+). This is Asparagine--tRNA ligase from Yersinia enterocolitica serotype O:8 / biotype 1B (strain NCTC 13174 / 8081).